The following is a 116-amino-acid chain: Class I hydrophobin 1 (116 aa).

Residues 1 to 19 (MLFKQAILVATTLTDLAVA) form the signal peptide. Intrachain disulfides connect C35–C95, C42–C89, C43–C76, and C96–C109. N44 and N100 each carry an N-linked (GlcNAc...) asparagine glycan.

The protein belongs to the fungal hydrophobin family. In terms of assembly, self-assembles to form functional amyloid fibrils called rodlets. Self-assembly into fibrillar rodlets occurs spontaneously at hydrophobic:hydrophilic interfaces and the rodlets further associate laterally to form amphipathic monolayers.

The protein localises to the secreted. It is found in the cell wall. Functionally, aerial growth, conidiation, and dispersal of filamentous fungi in the environment rely upon a capability of their secreting small amphipathic proteins called hydrophobins (HPBs) with low sequence identity. Class I can self-assemble into an outermost layer of rodlet bundles on aerial cell surfaces, conferring cellular hydrophobicity that supports fungal growth, development and dispersal; whereas Class II form highly ordered films at water-air interfaces through intermolecular interactions but contribute nothing to the rodlet structure. The chain is Class I hydrophobin 1 from Pleurotus ostreatus (Oyster mushroom).